Here is a 269-residue protein sequence, read N- to C-terminus: Formamidopyrimidine-DNA glycosylase (269 aa).

Pro-2 functions as the Schiff-base intermediate with DNA in the catalytic mechanism. Catalysis depends on Glu-3, which acts as the Proton donor. Lys-57 serves as the catalytic Proton donor; for beta-elimination activity. Positions 90, 109, and 150 each coordinate DNA. The FPG-type zinc finger occupies 235-269 (QVYGRKGEPCRVCGTPIVATKHAQRATFYCRQCQK). Arg-259 (proton donor; for delta-elimination activity) is an active-site residue.

This sequence belongs to the FPG family. Monomer. Zn(2+) serves as cofactor.

The enzyme catalyses Hydrolysis of DNA containing ring-opened 7-methylguanine residues, releasing 2,6-diamino-4-hydroxy-5-(N-methyl)formamidopyrimidine.. It carries out the reaction 2'-deoxyribonucleotide-(2'-deoxyribose 5'-phosphate)-2'-deoxyribonucleotide-DNA = a 3'-end 2'-deoxyribonucleotide-(2,3-dehydro-2,3-deoxyribose 5'-phosphate)-DNA + a 5'-end 5'-phospho-2'-deoxyribonucleoside-DNA + H(+). In terms of biological role, involved in base excision repair of DNA damaged by oxidation or by mutagenic agents. Acts as a DNA glycosylase that recognizes and removes damaged bases. Has a preference for oxidized purines, such as 7,8-dihydro-8-oxoguanine (8-oxoG). Has AP (apurinic/apyrimidinic) lyase activity and introduces nicks in the DNA strand. Cleaves the DNA backbone by beta-delta elimination to generate a single-strand break at the site of the removed base with both 3'- and 5'-phosphates. This is Formamidopyrimidine-DNA glycosylase from Escherichia coli (strain K12 / MC4100 / BW2952).